Consider the following 685-residue polypeptide: Glycine--tRNA ligase beta subunit (685 aa).

Belongs to the class-II aminoacyl-tRNA synthetase family. Tetramer of two alpha and two beta subunits.

It is found in the cytoplasm. It catalyses the reaction tRNA(Gly) + glycine + ATP = glycyl-tRNA(Gly) + AMP + diphosphate. The chain is Glycine--tRNA ligase beta subunit from Leuconostoc mesenteroides subsp. mesenteroides (strain ATCC 8293 / DSM 20343 / BCRC 11652 / CCM 1803 / JCM 6124 / NCDO 523 / NBRC 100496 / NCIMB 8023 / NCTC 12954 / NRRL B-1118 / 37Y).